Consider the following 90-residue polypeptide: MAVKIRLKRMGAKKSPFYRIVVADARSPRDGRQIETVGTYNPLTQPATVNIDEEKALKWLADGAKPSDTVRNLFSEQGIMEKFHNQKFSK.

The protein belongs to the bacterial ribosomal protein bS16 family.

This is Small ribosomal subunit protein bS16 from Lysinibacillus sphaericus (strain C3-41).